Here is a 57-residue protein sequence, read N- to C-terminus: Large ribosomal subunit protein eL37 (57 aa).

Residues Cys-20, Cys-23, Cys-35, and Cys-38 each contribute to the Zn(2+) site. The segment at 20-38 (CRRCGEKSYHKQKKVCASC) adopts a C4-type zinc-finger fold.

The protein belongs to the eukaryotic ribosomal protein eL37 family. Zn(2+) is required as a cofactor.

Its function is as follows. Binds to the 23S rRNA. The polypeptide is Large ribosomal subunit protein eL37 (Natronomonas pharaonis (strain ATCC 35678 / DSM 2160 / CIP 103997 / JCM 8858 / NBRC 14720 / NCIMB 2260 / Gabara) (Halobacterium pharaonis)).